Reading from the N-terminus, the 118-residue chain is NADH-ubiquinone oxidoreductase chain 3 (118 aa).

The next 3 helical transmembrane spans lie at 1–21, 59–79, and 86–106; these read MLFFAVLGLLFFLIFFLVLVF, YTYFILLVFFVVFDLEVSLLL, and VLYKNFFSYLFFLVLLGIGFL.

It belongs to the complex I subunit 3 family.

It is found in the mitochondrion membrane. The enzyme catalyses a ubiquinone + NADH + 5 H(+)(in) = a ubiquinol + NAD(+) + 4 H(+)(out). Functionally, core subunit of the mitochondrial membrane respiratory chain NADH dehydrogenase (Complex I) that is believed to belong to the minimal assembly required for catalysis. Complex I functions in the transfer of electrons from NADH to the respiratory chain. The immediate electron acceptor for the enzyme is believed to be ubiquinone. This is NADH-ubiquinone oxidoreductase chain 3 (ND3) from Fasciola hepatica (Liver fluke).